The sequence spans 209 residues: 8-oxoguanine DNA glycosylase/AP lyase (209 aa).

Active-site residues include lysine 131 and aspartate 149.

It belongs to the type-2 OGG1 family.

The enzyme catalyses 2'-deoxyribonucleotide-(2'-deoxyribose 5'-phosphate)-2'-deoxyribonucleotide-DNA = a 3'-end 2'-deoxyribonucleotide-(2,3-dehydro-2,3-deoxyribose 5'-phosphate)-DNA + a 5'-end 5'-phospho-2'-deoxyribonucleoside-DNA + H(+). Functionally, catalyzes the excision of an oxidatively damaged form of guanine (7,8-dihydro-8-oxoguanine = 8-oxoG) from DNA. Also cleaves the DNA backbone at apurinic/apyrimidinic sites (AP sites). The polypeptide is 8-oxoguanine DNA glycosylase/AP lyase (Korarchaeum cryptofilum (strain OPF8)).